The primary structure comprises 210 residues: Thiamine-phosphate synthase (210 aa).

4-amino-2-methyl-5-(diphosphooxymethyl)pyrimidine is bound by residues 36–40 and Asn68; that span reads QLREK. Mg(2+) is bound by residues Asp69 and Asp88. Residue Ser107 participates in 4-amino-2-methyl-5-(diphosphooxymethyl)pyrimidine binding. Position 133–135 (133–135) interacts with 2-[(2R,5Z)-2-carboxy-4-methylthiazol-5(2H)-ylidene]ethyl phosphate; the sequence is TGS. Position 136 (Lys136) interacts with 4-amino-2-methyl-5-(diphosphooxymethyl)pyrimidine. Residues Gly164 and 184–185 each bind 2-[(2R,5Z)-2-carboxy-4-methylthiazol-5(2H)-ylidene]ethyl phosphate; that span reads IS.

The protein belongs to the thiamine-phosphate synthase family. It depends on Mg(2+) as a cofactor.

The catalysed reaction is 2-[(2R,5Z)-2-carboxy-4-methylthiazol-5(2H)-ylidene]ethyl phosphate + 4-amino-2-methyl-5-(diphosphooxymethyl)pyrimidine + 2 H(+) = thiamine phosphate + CO2 + diphosphate. The enzyme catalyses 2-(2-carboxy-4-methylthiazol-5-yl)ethyl phosphate + 4-amino-2-methyl-5-(diphosphooxymethyl)pyrimidine + 2 H(+) = thiamine phosphate + CO2 + diphosphate. It carries out the reaction 4-methyl-5-(2-phosphooxyethyl)-thiazole + 4-amino-2-methyl-5-(diphosphooxymethyl)pyrimidine + H(+) = thiamine phosphate + diphosphate. It participates in cofactor biosynthesis; thiamine diphosphate biosynthesis; thiamine phosphate from 4-amino-2-methyl-5-diphosphomethylpyrimidine and 4-methyl-5-(2-phosphoethyl)-thiazole: step 1/1. Its function is as follows. Condenses 4-methyl-5-(beta-hydroxyethyl)thiazole monophosphate (THZ-P) and 2-methyl-4-amino-5-hydroxymethyl pyrimidine pyrophosphate (HMP-PP) to form thiamine monophosphate (TMP). The sequence is that of Thiamine-phosphate synthase from Moorella thermoacetica (strain ATCC 39073 / JCM 9320).